A 127-amino-acid polypeptide reads, in one-letter code: Putative pre-16S rRNA nuclease (127 aa).

Belongs to the YqgF nuclease family.

It is found in the cytoplasm. In terms of biological role, could be a nuclease involved in processing of the 5'-end of pre-16S rRNA. The sequence is that of Putative pre-16S rRNA nuclease from Campylobacter jejuni subsp. jejuni serotype O:6 (strain 81116 / NCTC 11828).